A 347-amino-acid polypeptide reads, in one-letter code: S-adenosylmethionine decarboxylase proenzyme (347 aa).

Active-site residues include Glu10 and Glu13. Residue Ser66 is the Schiff-base intermediate with substrate; via pyruvic acid of the active site. At Ser66 the chain carries Pyruvic acid (Ser); by autocatalysis. The Proton donor; for catalytic activity role is filled by Cys80. Active-site proton acceptor; for processing activity residues include Ser237 and His251.

It belongs to the eukaryotic AdoMetDC family. Pyruvate serves as cofactor. Is synthesized initially as an inactive proenzyme. Formation of the active enzyme involves a self-maturation process in which the active site pyruvoyl group is generated from an internal serine residue via an autocatalytic post-translational modification. Two non-identical subunits are generated from the proenzyme in this reaction, and the pyruvate is formed at the N-terminus of the alpha chain, which is derived from the carboxyl end of the proenzyme. The post-translation cleavage follows an unusual pathway, termed non-hydrolytic serinolysis, in which the side chain hydroxyl group of the serine supplies its oxygen atom to form the C-terminus of the beta chain, while the remainder of the serine residue undergoes an oxidative deamination to produce ammonia and the pyruvoyl group blocking the N-terminus of the alpha chain.

The catalysed reaction is S-adenosyl-L-methionine + H(+) = S-adenosyl 3-(methylsulfanyl)propylamine + CO2. It participates in amine and polyamine biosynthesis; S-adenosylmethioninamine biosynthesis; S-adenosylmethioninamine from S-adenosyl-L-methionine: step 1/1. The chain is S-adenosylmethionine decarboxylase proenzyme (SamDC) from Drosophila melanogaster (Fruit fly).